The primary structure comprises 173 residues: Large ribosomal subunit protein uL18 (173 aa).

This sequence belongs to the universal ribosomal protein uL18 family. As to quaternary structure, part of the 50S ribosomal subunit. Contacts the 5S and 23S rRNAs.

Its function is as follows. This is one of the proteins that bind and probably mediate the attachment of the 5S RNA into the large ribosomal subunit, where it forms part of the central protuberance. This chain is Large ribosomal subunit protein uL18, found in Methanococcoides burtonii (strain DSM 6242 / NBRC 107633 / OCM 468 / ACE-M).